The primary structure comprises 363 residues: Fructose-1,6-bisphosphate aldolase/phosphatase (363 aa).

Asp11 (proton acceptor; for FBP phosphatase activity) is an active-site residue. Asp11, His18, Asp51, and Asp52 together coordinate Mg(2+). His18 contributes to the beta-D-fructose 1,6-bisphosphate binding site. His18 serves as a coordination point for dihydroxyacetone phosphate. Beta-D-fructose 1,6-bisphosphate is bound at residue Tyr89. Position 93 (Gln93) interacts with Mg(2+). A beta-D-fructose 1,6-bisphosphate-binding site is contributed by 102 to 103 (GN). Asp130 is a binding site for Mg(2+). Residue Lys131 participates in beta-D-fructose 1,6-bisphosphate binding. Lys131 serves as a coordination point for dihydroxyacetone phosphate. Residue Tyr230 is the Proton donor/acceptor; for FBP aldolase activity of the active site. Mg(2+) contacts are provided by Lys233, Asp234, and Asp235. Lys233 serves as the catalytic Schiff-base intermediate with DHAP; for FBP aldolase activity. Residues 243–244 (QK), Arg267, and Tyr348 contribute to the beta-D-fructose 1,6-bisphosphate site. A dihydroxyacetone phosphate-binding site is contributed by Arg267.

Belongs to the FBP aldolase/phosphatase family. Homooctamer; dimer of tetramers. It depends on Mg(2+) as a cofactor.

It carries out the reaction beta-D-fructose 1,6-bisphosphate + H2O = beta-D-fructose 6-phosphate + phosphate. It catalyses the reaction beta-D-fructose 1,6-bisphosphate = D-glyceraldehyde 3-phosphate + dihydroxyacetone phosphate. It participates in carbohydrate biosynthesis; gluconeogenesis. Its function is as follows. Catalyzes two subsequent steps in gluconeogenesis: the aldol condensation of dihydroxyacetone phosphate (DHAP) and glyceraldehyde-3-phosphate (GA3P) to fructose-1,6-bisphosphate (FBP), and the dephosphorylation of FBP to fructose-6-phosphate (F6P). The chain is Fructose-1,6-bisphosphate aldolase/phosphatase from Thermus thermophilus (strain ATCC BAA-163 / DSM 7039 / HB27).